Consider the following 210-residue polypeptide: Large ribosomal subunit protein mL57 (210 aa).

Residues 1–59 constitute a mitochondrion transit peptide; the sequence is MLTRHCNRLGLQIENKFVFRSSSWNCVRRIGKIACNENKYRYEMTSTEEDIDSFFSRVF.

The protein belongs to the ribonuclease III family. Mitochondrion-specific ribosomal protein mL57 subfamily. As to quaternary structure, component of the mitochondrial large ribosomal subunit (mt-LSU). Mature yeast 74S mitochondrial ribosomes consist of a small (37S) and a large (54S) subunit. The 37S small subunit contains a 15S ribosomal RNA (15S mt-rRNA) and at least 32 different proteins. The 54S large subunit contains a 21S rRNA (21S mt-rRNA) and at least 45 different proteins. mL57 forms a heterodimer with mL44 and stabilizes rRNA expansion segments 1/2 at a membrane-facing protuberance close to the point of attachment of the ribosome to the translocon in the membrane.

The protein resides in the mitochondrion. Its function is as follows. Component of the mitochondrial ribosome (mitoribosome), a dedicated translation machinery responsible for the synthesis of mitochondrial genome-encoded proteins, including at least some of the essential transmembrane subunits of the mitochondrial respiratory chain. The mitoribosomes are attached to the mitochondrial inner membrane and translation products are cotranslationally integrated into the membrane. The chain is Large ribosomal subunit protein mL57 (mrp15) from Schizosaccharomyces pombe (strain 972 / ATCC 24843) (Fission yeast).